A 130-amino-acid chain; its full sequence is Small ribosomal subunit protein uS9 (130 aa).

The protein belongs to the universal ribosomal protein uS9 family.

The polypeptide is Small ribosomal subunit protein uS9 (Vibrio atlanticus (strain LGP32) (Vibrio splendidus (strain Mel32))).